Here is a 238-residue protein sequence, read N- to C-terminus: Aliphatic sulfonates import ATP-binding protein SsuB (238 aa).

Positions 7–221 constitute an ABC transporter domain; the sequence is VSLHQVHQQF…RPGDAAFASL (215 aa). Residue 39-46 participates in ATP binding; it reads GRSGSGKT.

Belongs to the ABC transporter superfamily. Aliphatic sulfonates importer (TC 3.A.1.17.2) family. In terms of assembly, the complex is composed of two ATP-binding proteins (SsuB), two transmembrane proteins (SsuC) and a solute-binding protein (SsuA).

The protein localises to the cell inner membrane. It catalyses the reaction ATP + H2O + aliphatic sulfonate-[sulfonate-binding protein]Side 1 = ADP + phosphate + aliphatic sulfonateSide 2 + [sulfonate-binding protein]Side 1.. In terms of biological role, part of the ABC transporter complex SsuABC involved in aliphatic sulfonates import. Responsible for energy coupling to the transport system. This is Aliphatic sulfonates import ATP-binding protein SsuB from Granulibacter bethesdensis (strain ATCC BAA-1260 / CGDNIH1).